We begin with the raw amino-acid sequence, 157 residues long: Large ribosomal subunit protein uL15 (157 aa).

The interval 1 to 40 is disordered; the sequence is MKLHELSDNPGATKKRMRIGRGPGSGKGKMGGRGIKGQKS. Over residues 21-35 the composition is skewed to gly residues; sequence RGPGSGKGKMGGRGI.

This sequence belongs to the universal ribosomal protein uL15 family. In terms of assembly, part of the 50S ribosomal subunit.

Its function is as follows. Binds to the 23S rRNA. The protein is Large ribosomal subunit protein uL15 of Ruegeria pomeroyi (strain ATCC 700808 / DSM 15171 / DSS-3) (Silicibacter pomeroyi).